Consider the following 361-residue polypeptide: Ankyrin repeat domain-containing protein 16 (361 aa).

ANK repeat units follow at residues 36–66 (AGDTLLHCAARHGHRDVLAYLAEAWGMDIEA), 70–99 (DYKRPLHEAASMGHRDCVRYLLGRGAAVDC), 103–132 (ADWTPLMMACTRKNLGVIQELVEHGANPLL), 136–165 (DGWNSFHIASREGDPLILQYLLTVCPGAWK), 170–200 (IRRTPLHTAAMHGHLEAVKVLLKRCQYEPDY), 204–234 (CGVTALMDAIQCGHIDVARLLLDEHGACLSA), 238–268 (LGAQALHRAAVTGQDEAIRFLVSELGVDVDV), 273–302 (THLTALHYAAKEGHTSTIQTLLSLGADINS), and 306–335 (KNRSALHLACAGQHLACAKFLLQSGLKDSE).

Interacts with AARS; the interaction is direct.

The protein localises to the cytoplasm. Its subcellular location is the nucleus. Functionally, required to prevent the misactivation of serine (Ser) with tRNA(Ala) by promoting the hydrolysis of Ser-mischarged tRNA(Ala), thereby playing a role in translational fidelity. Binds directly to the catalytic domain of AARS/AlaRS and captures Ser that is misactivated by AARS/AlaRS, preventing the charging of Ser adenylates to tRNA(Ala) and precluding Ser misincorporation in nascent peptides. The sequence is that of Ankyrin repeat domain-containing protein 16 from Homo sapiens (Human).